The chain runs to 83 residues: Type 3 secretion system needle filament protein (83 aa).

The protein belongs to the SctF family. In terms of assembly, the core secretion machinery of the T3SS is composed of approximately 20 different proteins, including cytoplasmic components, a base, an export apparatus and a needle. This subunit polymerizes and forms the helical needle filament. Interacts with the needle tip protein IpaD/SctA. Interacts with the export apparatus components SpaP/SctR, SpaQ/SctS and SpaR/SctT.

The protein resides in the secreted. It localises to the cell surface. Component of the type III secretion system (T3SS), also called injectisome, which is used to inject bacterial effector proteins into eukaryotic host cells. MxiH/SctF forms the external needle filament that protrudes from the bacterial surface. Its function is as follows. During infection, can induce innate immune responses. The needle proteins interact with host TLR2 or TLR4, and induce signaling by NF-kappa-B and/or AP-1. This activation is MyD88 dependent and results in increased expression of cytokines, including TNF-alpha, IL-6 and IL-8. This Shigella flexneri protein is Type 3 secretion system needle filament protein.